A 976-amino-acid polypeptide reads, in one-letter code: Synaptonemal complex protein 1 (976 aa).

A Mediates head to head self-assembly of N-terminal ends motif is present at residues 101 to 111 (GLSRVYSKLYK). The short motif at 117 to 120 (KKWK) is the Nuclear localization signal element. The tract at residues 206–362 (ETRQVYMDLN…CQLTEEKETQ (157 aa)) is interaction with SYCE3. Coiled coils occupy residues 211 to 316 (YMDL…SIEK), 391 to 439 (LRTE…LKKV), 499 to 685 (VKDL…VEKA), and 739 to 798 (EQEQ…KTQT). A required for pH-induced assembly of C-terminal ends into antiparallel tetramers region spans residues 676–770 (ENLLEEVEKA…LSVKKQLEIE (95 aa)). A Nuclear localization signal motif is present at residues 679–682 (LEEV). The segment at 784–976 (NTATLKEKKD…KLKEAEKLFV (193 aa)) is DNA-binding. The short motif at 880-883 (KKRK) is the Nuclear localization signal element.

Structural component of synaptonemal complexes. Homotetramer that consists of an N-terminal four-helical bundle that bifurcates into two elongated C-terminal dimeric coiled coils. This tetrameric building block potentially self-assembles into a supramolecular zipper-like lattice to mediate meiotic chromosome synapsis. Self-assembly is likely initiated by local proton density at chromosome axis, which is predicted to trigger antiparallel back to back assembly of adjacent C-terminal ends into tetrameric structures that anchor to chromosomal DNA. Then the N-terminal ends are predicted to undergo cooperative antiparallel head to head assembly at the midline of synaptonemal complexes central element to form a zipper-like lattice between properly aligned homologous chromosomes. The nascent synapsis generated by SYCP1 is stabilized through interaction with central element proteins SYCE1 and SYCE2. Interacts (via tetrameric core) with SYCE3; the interaction remodels SYCP1 homotetramers to 2:1 heterotrimers with SYCE3. SYCP1/SYCE3 heterotrimers form lattice assemblies as part of the mature synaptonemal complex via both lateral and head-to-head interactions. Forms a complex with EWSR1, PRDM9, SYCP3 and REC8; complex formation is dependent of phosphorylated form of REC8 and requires PRDM9 bound to hotspot DNA; EWSR1 joins PRDM9 with the chromosomal axis through REC8. Interacts with SPO16. As to expression, testis.

It localises to the nucleus. Its subcellular location is the chromosome. The protein resides in the centromere. Major component of the transverse filaments of synaptonemal complexes, formed between homologous chromosomes during meiotic prophase. Required for normal assembly of the central element of the synaptonemal complexes. Required for normal centromere pairing during meiosis. Required for normal meiotic chromosome synapsis during oocyte and spermatocyte development and for normal male and female fertility. This chain is Synaptonemal complex protein 1, found in Homo sapiens (Human).